The sequence spans 183 residues: Putative NAD(P)H nitroreductase YdjA (183 aa).

Residues 10 to 12 (RRS), arginine 35, and histidine 39 each bind FMN. 121-126 (AAVAQG) contributes to the NAD(+) binding site. 131-133 (WRS) is a binding site for FMN.

This sequence belongs to the nitroreductase family. As to quaternary structure, homodimer. Requires FMN as cofactor.

This Escherichia coli O157:H7 protein is Putative NAD(P)H nitroreductase YdjA (ydjA).